We begin with the raw amino-acid sequence, 272 residues long: Orotidine 5'-phosphate decarboxylase (272 aa).

The active-site Proton donor is Lys95.

This sequence belongs to the OMP decarboxylase family. Type 2 subfamily.

It carries out the reaction orotidine 5'-phosphate + H(+) = UMP + CO2. The protein operates within pyrimidine metabolism; UMP biosynthesis via de novo pathway; UMP from orotate: step 2/2. The polypeptide is Orotidine 5'-phosphate decarboxylase (Cupriavidus necator (strain ATCC 17699 / DSM 428 / KCTC 22496 / NCIMB 10442 / H16 / Stanier 337) (Ralstonia eutropha)).